Reading from the N-terminus, the 113-residue chain is uncharacterized protein (113 aa).

This sequence to H.influenzae HI_1053 and P.denitrificans COX locus Uncharacterized protein 4.

This is an uncharacterized protein from Cupriavidus necator (strain ATCC 17699 / DSM 428 / KCTC 22496 / NCIMB 10442 / H16 / Stanier 337) (Ralstonia eutropha).